The chain runs to 348 residues: Dihydroorotase (348 aa).

Positions 17 and 19 each coordinate Zn(2+). Substrate is bound by residues His19–Arg21 and Asn45. Residues Lys103, His140, and His178 each coordinate Zn(2+). Position 103 is an N6-carboxylysine (Lys103). His140 contributes to the substrate binding site. Residue Leu223 coordinates substrate. Residue Asp251 participates in Zn(2+) binding. The active site involves Asp251. The substrate site is built by His255 and Ala267.

It belongs to the metallo-dependent hydrolases superfamily. DHOase family. Class II DHOase subfamily. As to quaternary structure, homodimer. Zn(2+) is required as a cofactor.

It catalyses the reaction (S)-dihydroorotate + H2O = N-carbamoyl-L-aspartate + H(+). Its pathway is pyrimidine metabolism; UMP biosynthesis via de novo pathway; (S)-dihydroorotate from bicarbonate: step 3/3. Catalyzes the reversible cyclization of carbamoyl aspartate to dihydroorotate. The polypeptide is Dihydroorotase (Salmonella typhimurium (strain LT2 / SGSC1412 / ATCC 700720)).